The sequence spans 399 residues: Ubiquitin-like modifier-activating enzyme 5 (399 aa).

Residues G76, D97, K120, N143, and N177 each coordinate ATP. Zn(2+) contacts are provided by C219 and C222. C243 (glycyl thioester intermediate) is an active-site residue. 2 residues coordinate Zn(2+): C296 and C301.

This sequence belongs to the ubiquitin-activating E1 family. UBA5 subfamily.

Its function is as follows. E1-like enzyme which activates UFM1. The polypeptide is Ubiquitin-like modifier-activating enzyme 5 (Drosophila mojavensis (Fruit fly)).